The chain runs to 488 residues: Glutamyl-tRNA(Gln) amidotransferase subunit A (488 aa).

Catalysis depends on charge relay system residues Lys-77 and Ser-152. Catalysis depends on Ser-176, which acts as the Acyl-ester intermediate.

Belongs to the amidase family. GatA subfamily. As to quaternary structure, heterotrimer of A, B and C subunits.

It carries out the reaction L-glutamyl-tRNA(Gln) + L-glutamine + ATP + H2O = L-glutaminyl-tRNA(Gln) + L-glutamate + ADP + phosphate + H(+). Its function is as follows. Allows the formation of correctly charged Gln-tRNA(Gln) through the transamidation of misacylated Glu-tRNA(Gln) in organisms which lack glutaminyl-tRNA synthetase. The reaction takes place in the presence of glutamine and ATP through an activated gamma-phospho-Glu-tRNA(Gln). The sequence is that of Glutamyl-tRNA(Gln) amidotransferase subunit A from Streptococcus pyogenes serotype M5 (strain Manfredo).